The primary structure comprises 184 residues: ATP synthase subunit b, chloroplastic (184 aa).

A helical membrane pass occupies residues 27–49 (LATNPINLSVVFGVLIFFGKGVL).

The protein belongs to the ATPase B chain family. F-type ATPases have 2 components, F(1) - the catalytic core - and F(0) - the membrane proton channel. F(1) has five subunits: alpha(3), beta(3), gamma(1), delta(1), epsilon(1). F(0) has four main subunits: a(1), b(1), b'(1) and c(10-14). The alpha and beta chains form an alternating ring which encloses part of the gamma chain. F(1) is attached to F(0) by a central stalk formed by the gamma and epsilon chains, while a peripheral stalk is formed by the delta, b and b' chains.

The protein localises to the plastid. It localises to the chloroplast thylakoid membrane. In terms of biological role, f(1)F(0) ATP synthase produces ATP from ADP in the presence of a proton or sodium gradient. F-type ATPases consist of two structural domains, F(1) containing the extramembraneous catalytic core and F(0) containing the membrane proton channel, linked together by a central stalk and a peripheral stalk. During catalysis, ATP synthesis in the catalytic domain of F(1) is coupled via a rotary mechanism of the central stalk subunits to proton translocation. Its function is as follows. Component of the F(0) channel, it forms part of the peripheral stalk, linking F(1) to F(0). In Draba nemorosa (Woodland whitlowgrass), this protein is ATP synthase subunit b, chloroplastic.